Here is a 1018-residue protein sequence, read N- to C-terminus: Ubiquitin carboxyl-terminal hydrolase 35 (1018 aa).

The region spanning 441 to 926 is the USP domain; sequence IGLINLGNTC…TAYVLFYRQR (486 aa). The active-site Nucleophile is cysteine 450. Disordered regions lie at residues 544–566 and 610–757; these read QKLKQSSSPSPPEEPPAPSSTSV and RLGS…GSEG. The span at 552–561 shows a compositional bias: pro residues; that stretch reads PSPPEEPPAP. A Phosphoserine modification is found at serine 613. Basic and acidic residues-rich tracts occupy residues 673–691, 699–709, and 718–728; these read QEERIEREEEGKEERTEKE, STRGEGEREKE, and KVEKETEKEAE. Histidine 862 (proton acceptor) is an active-site residue. Residues 984–1011 form a disordered region; that stretch reads HWGRGFDEDKDEDEGSPGGCNPAGGNGG. Residues 999–1011 show a composition bias toward gly residues; the sequence is SPGGCNPAGGNGG.

Belongs to the peptidase C19 family. As to quaternary structure, homodimer (via C-terminal region). Interacts with HSP90AA1. Ubiquitinated by CHIP/STUB1 in an HSP90-dependent manner; leading to proteasomal degradation. This ubiquitination can be reversed through auto-deubiquitinating activity. In terms of tissue distribution, expressed in testis, pancreas and skeletal muscle.

The protein localises to the cytoplasm. The protein resides in the mitochondrion. It catalyses the reaction Thiol-dependent hydrolysis of ester, thioester, amide, peptide and isopeptide bonds formed by the C-terminal Gly of ubiquitin (a 76-residue protein attached to proteins as an intracellular targeting signal).. Functionally, deubiquitinase that plays a role in different processes including cell cycle regulation, mitophagy or endoplasmic reticulum stress. Inhibits TNFalpha-induced NF-kappa-B activation through stabilizing TNIP2 protein via deubiquitination. Plays an essential role during mitosis by deubiquitinating and thereby regulating the levels of Aurora B/AURKB protein. In addition, regulates the protein levels of other key component of the chromosomal passenger complex (CPC) such as survivin/BIRC5 or Borealin/CDCA8 by enhancing their stability. Regulates the degradation of mitochondria through the process of autophagy termed mitophagy. This chain is Ubiquitin carboxyl-terminal hydrolase 35 (USP35), found in Homo sapiens (Human).